Here is a 1081-residue protein sequence, read N- to C-terminus: Psi-producing oxygenase A (1081 aa).

Positions 105 to 446 (TKSFLNMLWN…DGAFNDDDLV (342 aa)) are linoleate 8R-lipoxygenase. His-202 serves as a coordination point for heme b. Tyr-374 is a catalytic residue. A heme b-binding site is contributed by His-377. Residues 654 to 1081 (IFISSHAACM…GELPQLKEDF (428 aa)) are 9,12-octadecadienoate 8-hydroperoxide 8R-isomerase.

The protein belongs to the peroxidase family. Homotetramer. Heme b is required as a cofactor.

It catalyses the reaction (9Z,12Z)-octadecadienoate + O2 = (8R,9Z,12Z)-8-hydroperoxyoctadeca-9,12-dienoate. It carries out the reaction (8R,9Z,12Z)-8-hydroperoxyoctadeca-9,12-dienoate = (5S,8R,9Z,12Z)-5,8-dihydroxyoctadeca-9,12-dienoate. Its function is as follows. Bifunctional heme-containing enzyme that oxidizes linoleic acid to (8R,9Z,12Z)-8-hydroperoxyoctadeca-9,12-dienoate (within the N-terminal heme peroxidase domain), which is subsequently isomerized to (5S,8R,9Z,12Z)-5,8-dihydroxyoctadeca-9,12-dienoate (within the C-terminal P450 heme thiolate domain). Oxidized unsaturated fatty acids, so-called oxylipins, derived from endogenous fatty acids, influence the development of the asexual conidiophores and sexual cleistothecia and regulate the secondary metabolism. These substances were collectively named psi factors and are primarily a mixture of hydroxylated oleic, linoleic and alpha-linolenic acids. They are termed psi-beta, psi-alpha, and psi-gamma, respectively. The sequence is that of Psi-producing oxygenase A (ppoA) from Emericella nidulans (Aspergillus nidulans).